The chain runs to 479 residues: Leucine-rich repeat-containing protein 74A (479 aa).

Residues 1 to 10 (MDDDDIEPLE) show a composition bias toward acidic residues. The interval 1-29 (MDDDDIEPLEYETKDETEAALAPQSSEDT) is disordered. LRR repeat units follow at residues 119-140 (TVLK…SLME), 147-167 (YLQE…RIIS), 176-197 (SLWK…LLCQ), 204-225 (RIRS…YLGQ), 232-253 (GLQS…ALCN), 260-281 (TLKK…ALGD), 288-309 (CLVY…RISK), and 316-336 (CLQV…YSLI).

This Rattus norvegicus (Rat) protein is Leucine-rich repeat-containing protein 74A.